The sequence spans 496 residues: T-cell activation inhibitor, mitochondrial (496 aa).

Positions 404–437 form a coiled coil; sequence KAQQARENMKRKEELKVIENELIQASTKKFSLEK.

Its subcellular location is the mitochondrion. May regulate T-cell apoptosis. This chain is T-cell activation inhibitor, mitochondrial (TCAIM), found in Homo sapiens (Human).